Here is a 332-residue protein sequence, read N- to C-terminus: Glycerol-3-phosphate dehydrogenase [NAD(P)+] (332 aa).

5 residues coordinate NADPH: serine 10, tryptophan 11, histidine 31, arginine 32, and lysine 105. Lysine 105, glycine 136, and serine 138 together coordinate sn-glycerol 3-phosphate. Alanine 140 provides a ligand contact to NADPH. Sn-glycerol 3-phosphate is bound by residues lysine 191, aspartate 244, serine 254, arginine 255, and asparagine 256. Catalysis depends on lysine 191, which acts as the Proton acceptor. Arginine 255 serves as a coordination point for NADPH. NADPH is bound by residues valine 279 and glutamate 281.

Belongs to the NAD-dependent glycerol-3-phosphate dehydrogenase family.

It is found in the cytoplasm. It catalyses the reaction sn-glycerol 3-phosphate + NAD(+) = dihydroxyacetone phosphate + NADH + H(+). The catalysed reaction is sn-glycerol 3-phosphate + NADP(+) = dihydroxyacetone phosphate + NADPH + H(+). It participates in membrane lipid metabolism; glycerophospholipid metabolism. Functionally, catalyzes the reduction of the glycolytic intermediate dihydroxyacetone phosphate (DHAP) to sn-glycerol 3-phosphate (G3P), the key precursor for phospholipid synthesis. The chain is Glycerol-3-phosphate dehydrogenase [NAD(P)+] from Prosthecochloris aestuarii (strain DSM 271 / SK 413).